A 379-amino-acid polypeptide reads, in one-letter code: Citrate utilization protein B (379 aa).

Residues cysteine 28, cysteine 31, cysteine 34, cysteine 38, cysteine 62, cysteine 65, cysteine 68, and cysteine 72 each contribute to the [4Fe-4S] cluster site.

This chain is Citrate utilization protein B (citB), found in Escherichia coli.